The primary structure comprises 109 residues: Nucleoid-associated protein Asuc_0997 (109 aa).

Residues M1–K23 form a disordered region.

This sequence belongs to the YbaB/EbfC family. As to quaternary structure, homodimer.

The protein localises to the cytoplasm. It is found in the nucleoid. Functionally, binds to DNA and alters its conformation. May be involved in regulation of gene expression, nucleoid organization and DNA protection. The protein is Nucleoid-associated protein Asuc_0997 of Actinobacillus succinogenes (strain ATCC 55618 / DSM 22257 / CCUG 43843 / 130Z).